The following is a 231-amino-acid chain: MAKKLSKNQQKVRALFDANQAYDLHEAIELAKKTSYTKFDASVDLAFKLNLDVRKADQQLRGSVLLPKGTGKDVKVLVVTNNPEKQKLATEAKADFVLDAAAFEQKLKEDDYNFDVIVADPAMMPILGKYGKKLGPKGLMPNPKTGTVTPTPEKAVEELKKGKANYRTDKAGVVHSLIGKVSMPTESLVENAQTLISLIKKLKPAAVKGTYMQNLTVSSSMGPGIKIKLEK.

It belongs to the universal ribosomal protein uL1 family. As to quaternary structure, part of the 50S ribosomal subunit.

In terms of biological role, binds directly to 23S rRNA. The L1 stalk is quite mobile in the ribosome, and is involved in E site tRNA release. Functionally, protein L1 is also a translational repressor protein, it controls the translation of the L11 operon by binding to its mRNA. This is Large ribosomal subunit protein uL1 from Mycoplasmopsis synoviae (strain 53) (Mycoplasma synoviae).